A 224-amino-acid polypeptide reads, in one-letter code: Orotidine 5'-phosphate decarboxylase (224 aa).

Residues Asp-10, Lys-32, 59–68, Thr-115, Arg-175, Gln-184, Gly-204, and Arg-205 each bind substrate; that span reads DLKLHDIPNT. Lys-61 serves as the catalytic Proton donor.

It belongs to the OMP decarboxylase family. Type 1 subfamily. As to quaternary structure, homodimer.

The enzyme catalyses orotidine 5'-phosphate + H(+) = UMP + CO2. The protein operates within pyrimidine metabolism; UMP biosynthesis via de novo pathway; UMP from orotate: step 2/2. In terms of biological role, catalyzes the decarboxylation of orotidine 5'-monophosphate (OMP) to uridine 5'-monophosphate (UMP). The protein is Orotidine 5'-phosphate decarboxylase of Novosphingobium aromaticivorans (strain ATCC 700278 / DSM 12444 / CCUG 56034 / CIP 105152 / NBRC 16084 / F199).